Consider the following 356-residue polypeptide: 3-isopropylmalate dehydrogenase (356 aa).

Substrate-binding residues include Arg95, Arg105, Arg133, and Asp223. Mg(2+) contacts are provided by Asp223, Asp247, and Asp251. Residue 281 to 293 coordinates NAD(+); that stretch reads GSAPDIAGQNKAN.

The protein belongs to the isocitrate and isopropylmalate dehydrogenases family. LeuB type 1 subfamily. Homodimer. Mg(2+) is required as a cofactor. Requires Mn(2+) as cofactor.

It is found in the cytoplasm. It catalyses the reaction (2R,3S)-3-isopropylmalate + NAD(+) = 4-methyl-2-oxopentanoate + CO2 + NADH. The protein operates within amino-acid biosynthesis; L-leucine biosynthesis; L-leucine from 3-methyl-2-oxobutanoate: step 3/4. Its function is as follows. Catalyzes the oxidation of 3-carboxy-2-hydroxy-4-methylpentanoate (3-isopropylmalate) to 3-carboxy-4-methyl-2-oxopentanoate. The product decarboxylates to 4-methyl-2 oxopentanoate. This Neisseria meningitidis serogroup A / serotype 4A (strain DSM 15465 / Z2491) protein is 3-isopropylmalate dehydrogenase.